A 111-amino-acid chain; its full sequence is Large ribosomal subunit protein eL42 (111 aa).

Zn(2+) is bound by residues cysteine 12, cysteine 15, cysteine 72, and cysteine 77.

Belongs to the eukaryotic ribosomal protein eL42 family. As to quaternary structure, component of the large ribosomal subunit.

It localises to the cytoplasm. Component of the large ribosomal subunit. The ribosome is a large ribonucleoprotein complex responsible for the synthesis of proteins in the cell. This Oryctolagus cuniculus (Rabbit) protein is Large ribosomal subunit protein eL42 (RPL36A).